The primary structure comprises 73 residues: Conotoxin Cl9.2 (73 aa).

The first 18 residues, 1–18 (MSKLVILAVLVLLPLVTA), serve as a signal peptide directing secretion. Positions 19–41 (EHGRDEQAMQPEKKTMWTLWSLT) are excised as a propeptide. Disulfide bonds link C46–C61, C52–C63, and C58–C72.

Expressed by the venom duct.

The protein resides in the secreted. The chain is Conotoxin Cl9.2 from Californiconus californicus (California cone).